Consider the following 481-residue polypeptide: Guanine nucleotide exchange factor C9orf72 homolog (481 aa).

The uDENN C9ORF72-type domain occupies 23–194; it reads SPLLAATFAY…ELLASMKSHS (172 aa). The 144-residue stretch at 200 to 343 folds into the cDENN C9ORF72-type domain; it reads DIADTVLNDD…SELTAFWRAT (144 aa). Residues 370 to 464 form the dDENN C9ORF72-type domain; that stretch reads VLHRDTLVKA…IKPGLHSFIF (95 aa). The interval 461–481 is required for the homodimerization of the C9orf72-SMCR8 complex; it reads SFIFGRPFYTSVQERDVLMTF.

As to quaternary structure, component of the C9orf72-SMCR8 complex, at least composed of C9orf72, SMCR8 and WDR41. The complex is formed of two protomers, each individually consisting of one molecule each of C9orf72, SMCR8 and WDR41. The protomers homodimerize via an interaction between C9orf72 (via C-terminus) and SMCR8 (via N-terminus). Within each protomer SMCR8 (via DENN domain) acts as a bridging protein between WDR41 (via C-terminus and N-terminus) and C9orf72 (via C-terminus). The C9orf72-SMCR8 complex associates with the ULK1/ATG1 kinase complex. Interacts with ULK1/ATG1 kinase complex members ULK1, ATG13 and RB1CC1. Interacts with SMCR8; the interaction is direct. Interacts with HNRNPA1, HNRNPA2B1 and UBQLN2. Interacts with small Rab GTPase RAB1A; the interaction mediates recruitment of RAB1A to the ULK1/ATG1 kinase complex. Also interacts with small Rab GTPase RAB7A. Interacts with cofilin. Interacts with GTP-binding proteins ARF1 and ARF6. Interacts with the DLG4/PSD-95. Interacts with CARM1 (via PH domain-like fold). Interacts with RAB39A and RAB39B (in GDP-bound forms); functions as GEF for RAB39A and RAB39B. Expressed in postnatal cerebellum and cortex (at protein level). Neuronal expression is detected in several regions of the adult brain and spinal cord. Prominent expression also observed in embryonic and early postnatal neurons including retinal ganglion cells, sensory neurons in the olfactory epithelium and in dorsal root ganglia, and spinal motor neurons. Expressed in the developing cerebral cortex, cerebellum, olfactory bulb, hippocampus and spinal cord in the embryo and in P0 cortical neurons and astrocytes. Also expressed in non-neuronal tissues such as kidney and tooth. In the spleen, highly expressed in myeloid cells compared to B cell and T cell populations where expression is much lower. In the brain, highly expressed in microglia. In terms of tissue distribution, expressed in the forebrain, including in the glomerular layer of the olfactory bulb (at protein level).

It localises to the nucleus. The protein resides in the cytoplasm. Its subcellular location is the P-body. It is found in the stress granule. The protein localises to the endosome. It localises to the lysosome. The protein resides in the cytoplasmic vesicle. Its subcellular location is the autophagosome. It is found in the autolysosome. The protein localises to the secreted. It localises to the cell projection. The protein resides in the axon. Its subcellular location is the growth cone. It is found in the perikaryon. The protein localises to the dendrite. It localises to the presynapse. The protein resides in the postsynapse. Acts as a guanine-nucleotide releasing factor (GEF) for Rab GTPases by promoting the conversion of inactive RAB-GDP to the active form RAB-GTP. Acts as a GEF for RAB39A which enables HOPS-mediated autophagosome-lysosome membrane tethering and fusion in mammalian autophagy. Component of the C9orf72-SMCR8 complex where both subunits display GEF activity and that regulates autophagy. As part of the C9orf72-SMCR8-WDR41 (CSW) complex, functions as GEF for RAB8A, and RAB39B, thereby promoting autophagosome maturation. As part of the C9orf72-SMCR8 complex, also functions as GTPase activating protein (GAP) for RAB8A and RAB11A in vitro. The C9orf72-SMCR8 complex also acts as a regulator of autophagy initiation by interacting with the ULK1/ATG1 kinase complex and modulating its protein kinase activity. Promotes initiation of autophagy by regulating the RAB1A-dependent trafficking of the ULK1/ATG1 kinase complex to the phagophore which leads to autophagosome formation. Acts as a regulator of mTORC1 signaling by promoting phosphorylation of mTORC1 substrates. Plays a role in endosomal trafficking. May be involved in regulating the maturation of phagosomes to lysosomes. Promotes the lysosomal localization and lysosome-mediated degradation of CARM1 which leads to inhibition of starvation-induced lipid metabolism. Regulates actin dynamics in motor neurons by inhibiting the GTP-binding activity of ARF6, leading to ARF6 inactivation. This reduces the activity of the LIMK1 and LIMK2 kinases which are responsible for phosphorylation and inactivation of CFL1/cofilin, leading to cofilin activation. Positively regulates axon extension and axon growth cone size in spinal motor neurons. Required for SMCR8 protein expression and localization at pre- and post-synaptic compartments in the forebrain, also regulates protein abundance of RAB3A and GRIA1/GLUR1 in post-synaptic compartments in the forebrain and hippocampus. Plays a role within the hematopoietic system in restricting inflammation and the development of autoimmunity. The chain is Guanine nucleotide exchange factor C9orf72 homolog from Mus musculus (Mouse).